We begin with the raw amino-acid sequence, 399 residues long: Nicotinate phosphoribosyltransferase (399 aa).

His224 is modified (phosphohistidine; by autocatalysis).

The protein belongs to the NAPRTase family. Transiently phosphorylated on a His residue during the reaction cycle. Phosphorylation strongly increases the affinity for substrates and increases the rate of nicotinate D-ribonucleotide production. Dephosphorylation regenerates the low-affinity form of the enzyme, leading to product release.

It carries out the reaction nicotinate + 5-phospho-alpha-D-ribose 1-diphosphate + ATP + H2O = nicotinate beta-D-ribonucleotide + ADP + phosphate + diphosphate. It functions in the pathway cofactor biosynthesis; NAD(+) biosynthesis; nicotinate D-ribonucleotide from nicotinate: step 1/1. Catalyzes the synthesis of beta-nicotinate D-ribonucleotide from nicotinate and 5-phospho-D-ribose 1-phosphate at the expense of ATP. This Ectopseudomonas mendocina (strain ymp) (Pseudomonas mendocina) protein is Nicotinate phosphoribosyltransferase.